The primary structure comprises 299 residues: Oxygen-dependent coproporphyrinogen-III oxidase (299 aa).

Residue Ser-92 coordinates substrate. Positions 96 and 106 each coordinate a divalent metal cation. The Proton donor role is filled by His-106. A substrate-binding site is contributed by Asn-108–Arg-110. The a divalent metal cation site is built by His-145 and His-175. Residues Tyr-240–Glu-275 form an important for dimerization region. A substrate-binding site is contributed by Gly-258–Arg-260.

This sequence belongs to the aerobic coproporphyrinogen-III oxidase family. Homodimer. A divalent metal cation serves as cofactor.

It is found in the cytoplasm. It catalyses the reaction coproporphyrinogen III + O2 + 2 H(+) = protoporphyrinogen IX + 2 CO2 + 2 H2O. It functions in the pathway porphyrin-containing compound metabolism; protoporphyrin-IX biosynthesis; protoporphyrinogen-IX from coproporphyrinogen-III (O2 route): step 1/1. Involved in the heme biosynthesis. Catalyzes the aerobic oxidative decarboxylation of propionate groups of rings A and B of coproporphyrinogen-III to yield the vinyl groups in protoporphyrinogen-IX. The polypeptide is Oxygen-dependent coproporphyrinogen-III oxidase (Enterobacter sp. (strain 638)).